A 91-amino-acid chain; its full sequence is Small ribosomal subunit protein uS19 (91 aa).

This sequence belongs to the universal ribosomal protein uS19 family.

In terms of biological role, protein S19 forms a complex with S13 that binds strongly to the 16S ribosomal RNA. The chain is Small ribosomal subunit protein uS19 from Bordetella petrii (strain ATCC BAA-461 / DSM 12804 / CCUG 43448).